The chain runs to 858 residues: Neural cell adhesion molecule 1 (858 aa).

Residues 1 to 19 form the signal peptide; it reads MLRTKDLIWTLFFLGTAVS. 5 Ig-like C2-type domains span residues 20 to 111, 116 to 205, 212 to 302, 309 to 414, and 417 to 502; these read LQVD…ATVN, QKLM…KDIQ, PTVQ…ASIH, PKIT…LEVQ, and PKLQ…ESLE. Topologically, residues 20 to 721 are extracellular; that stretch reads LQVDIVPSQG…NGSPTAGLST (702 aa). Disulfide bonds link cysteine 41–cysteine 96 and cysteine 139–cysteine 189. Heparin contacts are provided by residues 152 to 156 and 161 to 165; these read KHKGR and KKDVR. An N-linked (GlcNAc...) asparagine glycan is attached at asparagine 222. The cysteines at positions 235 and 288 are disulfide-linked. N-linked (GlcNAc...) asparagine glycosylation is found at asparagine 316, asparagine 348, asparagine 434, asparagine 460, and asparagine 489. Cysteines 330 and 396 form a disulfide. Residues cysteine 437 and cysteine 490 are joined by a disulfide bond. 2 consecutive Fibronectin type-III domains span residues 510-609 and 611-706; these read TPSS…TQPV and EPSA…SAQP. Residues 722 to 739 traverse the membrane as a helical segment; it reads GAIVGILIVIFVLLLVVM. Residues 740–858 lie on the Cytoplasmic side of the membrane; that stretch reads DITCYFLNKC…TQTKENESKA (119 aa). The tract at residues 765 to 858 is disordered; the sequence is PGAKGKDMEE…TQTKENESKA (94 aa). Basic and acidic residues-rich tracts occupy residues 768 to 809 and 817 to 834; these read KGKD…HTEP and EPEK…ESEA. Serine 780 and serine 784 each carry phosphoserine.

Interacts with MDK. Found in a complex with SLC39A6, SLC39A10 and with NCAM1; this complex controls NCAM1 phosphorylation and integration into focal adhesion complexes during epithelial-tomesenchymal transition. Interacts with synaptic plasticity regulator PANTS. In terms of processing, polysialylated by ST8SIA2 and ST8SIA4. Polysialylation modulates cell interactions by confering both attractive and repulsive properties that are highly regulated by ST8SIA2 and ST8SIA4. Polysialylation is formed on a-2,3-linked sialic acid of core glycans.

The protein resides in the cell membrane. Functionally, this protein is a cell adhesion molecule involved in neuron-neuron adhesion, neurite fasciculation, outgrowth of neurites, etc. The chain is Neural cell adhesion molecule 1 from Rattus norvegicus (Rat).